The following is a 580-amino-acid chain: MEVPQPEPAPGSALSPAGVCGGAQRPGHLPGLLLGSHGLLGSPVRAAASSPVTTLTQTMHDLAGLGSETPKSQVGTLLFRSRSRLTHLSLSRRASESSLSSESSESSDAGLCMDSPSPMDPHMAEQTFEQAIQAASRIIRNEQFAIRRFQSMPVRLLGHSPVLRNITNSQAPDGRRKSEAGSGAASSSGEDKENDGFVFKMPWKPTHPSSTHALAEWASRREAFAQRPSSAPDLMCLSPDRKMEVEELSPLALGRFSLTPAEGDTEEDDGFVDILESDLKDDDAVPPGMESLISAPLVKTLEKEEEKDLVMYSKCQRLFRSPSMPCSVIRPILKRLERPQDRDTPVQNKRRRSVTPPEEQQEAEEPKARVLRSKSLCHDEIENLLDSDHRELIGDYSKAFLLQTVDGKHQDLKYISPETMVALLTGKFSNIVDKFVIVDCRYPYEYEGGHIKTAVNLPLERDAESFLLKSPIAPCSLDKRVILIFHCEFSSERGPRMCRFIRERDRAVNDYPSLYYPEMYILKGGYKEFFPQHPNFCEPQDYRPMNHEAFKDELKTFRLKTRSWAGERSRRELCSRLQDQ.

Positions 1-24 (MEVPQPEPAPGSALSPAGVCGGAQ) are disordered. Position 42 is a phosphoserine (Ser-42). The span at 89–107 (SLSRRASESSLSSESSESS) shows a compositional bias: low complexity. 2 disordered regions span residues 89–117 (SLSR…DSPS) and 165–196 (NITN…ENDG). Ser-169 carries the post-translational modification Phosphoserine; by MELK. The residue at position 249 (Ser-249) is a Phosphoserine. Ser-323 carries the phosphoserine; by MELK and MAPK14 modification. Residues 331–370 (PILKRLERPQDRDTPVQNKRRRSVTPPEEQQEAEEPKARV) are disordered. Residues 334 to 344 (KRLERPQDRDT) are compositionally biased toward basic and acidic residues. Residue Ser-353 is modified to Phosphoserine; by AURKA. A Phosphoserine; by BRSK1 and MAPK14 modification is found at Ser-375. Positions 431 to 538 (IVDKFVIVDC…FFPQHPNFCE (108 aa)) constitute a Rhodanese domain. Phosphoserine is present on Ser-470. Cys-487 is an active-site residue. Ser-563 bears the Phosphoserine mark.

It belongs to the MPI phosphatase family. As to quaternary structure, interacts with MAPK14 and 14-3-3 proteins. In terms of processing, phosphorylated by BRSK1 in vitro. Phosphorylated by CHEK1, which inhibits the activity of this protein. Phosphorylation at Ser-353 by AURKA might locally participate in the control of the onset of mitosis. Phosphorylation by MELK at Ser-169 promotes localization to the centrosome and the spindle poles during mitosis. Phosphorylation at Ser-323 and Ser-375 by MAPK14 is required for binding to 14-3-3 proteins.

The protein localises to the cytoplasm. Its subcellular location is the cytoskeleton. It localises to the microtubule organizing center. The protein resides in the centrosome. It is found in the spindle pole. It catalyses the reaction O-phospho-L-tyrosyl-[protein] + H2O = L-tyrosyl-[protein] + phosphate. Its activity is regulated as follows. Stimulated by B-type cyclins. Functionally, tyrosine protein phosphatase which functions as a dosage-dependent inducer of mitotic progression. Directly dephosphorylates CDK1 and stimulates its kinase activity. Required for G2/M phases of the cell cycle progression and abscission during cytokinesis in a ECT2-dependent manner. The three isoforms seem to have a different level of activity. This Homo sapiens (Human) protein is M-phase inducer phosphatase 2 (CDC25B).